The primary structure comprises 469 residues: Probable ribonuclease FAU-1 (469 aa).

Belongs to the FAU-1 family.

Functionally, probable RNase involved in rRNA stability through maturation and/or degradation of precursor rRNAs. Binds to RNA in loop regions with AU-rich sequences. The sequence is that of Probable ribonuclease FAU-1 from Pyrococcus horikoshii (strain ATCC 700860 / DSM 12428 / JCM 9974 / NBRC 100139 / OT-3).